A 256-amino-acid chain; its full sequence is Na(+)-translocating NADH-quinone reductase subunit E (256 aa).

6 consecutive transmembrane segments (helical) span residues 1–21, 50–70, 83–103, 123–143, 149–169, and 189–209; these read MWLGAYTWLNVFGILLQAAFI, MSVALVLTVTGSINWFVHAFI, LASVNLGFLELIIFIVVIAAF, GIFLPLIAVNCAILGGVLFGI, FIPMMIFSLGAGCGWWLAIVI, and MGISFITTGLIAMAFMSLTGI. Residues 229 to 249 are compositionally biased toward polar residues; sequence ENTTNPLKESSSKHQPSISKA. The interval 229–256 is disordered; it reads ENTTNPLKESSSKHQPSISKARTQRRSL.

The protein belongs to the NqrDE/RnfAE family. In terms of assembly, composed of six subunits; NqrA, NqrB, NqrC, NqrD, NqrE and NqrF.

Its subcellular location is the cell inner membrane. The catalysed reaction is a ubiquinone + n Na(+)(in) + NADH + H(+) = a ubiquinol + n Na(+)(out) + NAD(+). NQR complex catalyzes the reduction of ubiquinone-1 to ubiquinol by two successive reactions, coupled with the transport of Na(+) ions from the cytoplasm to the periplasm. NqrA to NqrE are probably involved in the second step, the conversion of ubisemiquinone to ubiquinol. This Chlamydia pneumoniae (Chlamydophila pneumoniae) protein is Na(+)-translocating NADH-quinone reductase subunit E.